Here is a 213-residue protein sequence, read N- to C-terminus: Uridine kinase (213 aa).

14-21 is an ATP binding site; the sequence is GASASGKS.

This sequence belongs to the uridine kinase family.

Its subcellular location is the cytoplasm. The enzyme catalyses uridine + ATP = UMP + ADP + H(+). It catalyses the reaction cytidine + ATP = CMP + ADP + H(+). It participates in pyrimidine metabolism; CTP biosynthesis via salvage pathway; CTP from cytidine: step 1/3. Its pathway is pyrimidine metabolism; UMP biosynthesis via salvage pathway; UMP from uridine: step 1/1. This Vibrio campbellii (strain ATCC BAA-1116) protein is Uridine kinase.